A 395-amino-acid chain; its full sequence is Phosphopentomutase (395 aa).

Residues aspartate 14, aspartate 286, histidine 291, aspartate 327, histidine 328, and histidine 339 each coordinate Mn(2+).

The protein belongs to the phosphopentomutase family. The cofactor is Mn(2+).

It localises to the cytoplasm. The catalysed reaction is 2-deoxy-alpha-D-ribose 1-phosphate = 2-deoxy-D-ribose 5-phosphate. It carries out the reaction alpha-D-ribose 1-phosphate = D-ribose 5-phosphate. The protein operates within carbohydrate degradation; 2-deoxy-D-ribose 1-phosphate degradation; D-glyceraldehyde 3-phosphate and acetaldehyde from 2-deoxy-alpha-D-ribose 1-phosphate: step 1/2. Isomerase that catalyzes the conversion of deoxy-ribose 1-phosphate (dRib-1-P) and ribose 1-phosphate (Rib-1-P) to deoxy-ribose 5-phosphate (dRib-5-P) and ribose 5-phosphate (Rib-5-P), respectively. The sequence is that of Phosphopentomutase from Staphylococcus haemolyticus (strain JCSC1435).